Reading from the N-terminus, the 263-residue chain is S-adenosylmethionine decarboxylase proenzyme (263 aa).

Catalysis depends on Ser113, which acts as the Schiff-base intermediate with substrate; via pyruvic acid. Ser113 is subject to Pyruvic acid (Ser); by autocatalysis. His118 (proton acceptor; for processing activity) is an active-site residue. Cys141 serves as the catalytic Proton donor; for catalytic activity.

The protein belongs to the prokaryotic AdoMetDC family. Type 2 subfamily. Heterooctamer of four alpha and four beta chains arranged as a tetramer of alpha/beta heterodimers. Pyruvate is required as a cofactor. Is synthesized initially as an inactive proenzyme. Formation of the active enzyme involves a self-maturation process in which the active site pyruvoyl group is generated from an internal serine residue via an autocatalytic post-translational modification. Two non-identical subunits are generated from the proenzyme in this reaction, and the pyruvate is formed at the N-terminus of the alpha chain, which is derived from the carboxyl end of the proenzyme. The post-translation cleavage follows an unusual pathway, termed non-hydrolytic serinolysis, in which the side chain hydroxyl group of the serine supplies its oxygen atom to form the C-terminus of the beta chain, while the remainder of the serine residue undergoes an oxidative deamination to produce ammonia and the pyruvoyl group blocking the N-terminus of the alpha chain.

It carries out the reaction S-adenosyl-L-methionine + H(+) = S-adenosyl 3-(methylsulfanyl)propylamine + CO2. The protein operates within amine and polyamine biosynthesis; S-adenosylmethioninamine biosynthesis; S-adenosylmethioninamine from S-adenosyl-L-methionine: step 1/1. Its function is as follows. Catalyzes the decarboxylation of S-adenosylmethionine to S-adenosylmethioninamine (dcAdoMet), the propylamine donor required for the synthesis of the polyamines spermine and spermidine from the diamine putrescine. This chain is S-adenosylmethionine decarboxylase proenzyme, found in Marinobacter nauticus (strain ATCC 700491 / DSM 11845 / VT8) (Marinobacter aquaeolei).